A 224-amino-acid chain; its full sequence is Holliday junction branch migration complex subunit RuvA (224 aa).

Residues 1 to 67 (MISWLKGEKV…EDGTSLYGFI (67 aa)) are domain I. Residues 68 to 146 (EVNQRDLFRE…RFTDNDKTIH (79 aa)) are domain II. The flexible linker stretch occupies residues 147-155 (ENKKGIEAN). Residues 156–224 (QFSKYIDEIY…ILMKLSEKTT (69 aa)) are domain III.

This sequence belongs to the RuvA family. In terms of assembly, homotetramer. Forms an RuvA(8)-RuvB(12)-Holliday junction (HJ) complex. HJ DNA is sandwiched between 2 RuvA tetramers; dsDNA enters through RuvA and exits via RuvB. An RuvB hexamer assembles on each DNA strand where it exits the tetramer. Each RuvB hexamer is contacted by two RuvA subunits (via domain III) on 2 adjacent RuvB subunits; this complex drives branch migration. In the full resolvosome a probable DNA-RuvA(4)-RuvB(12)-RuvC(2) complex forms which resolves the HJ.

It localises to the cytoplasm. The RuvA-RuvB-RuvC complex processes Holliday junction (HJ) DNA during genetic recombination and DNA repair, while the RuvA-RuvB complex plays an important role in the rescue of blocked DNA replication forks via replication fork reversal (RFR). RuvA specifically binds to HJ cruciform DNA, conferring on it an open structure. The RuvB hexamer acts as an ATP-dependent pump, pulling dsDNA into and through the RuvAB complex. HJ branch migration allows RuvC to scan DNA until it finds its consensus sequence, where it cleaves and resolves the cruciform DNA. The protein is Holliday junction branch migration complex subunit RuvA of Prochlorococcus marinus (strain NATL1A).